A 158-amino-acid polypeptide reads, in one-letter code: Endoribonuclease YbeY (158 aa).

The Zn(2+) site is built by H122, H126, and H132.

This sequence belongs to the endoribonuclease YbeY family. It depends on Zn(2+) as a cofactor.

Its subcellular location is the cytoplasm. Single strand-specific metallo-endoribonuclease involved in late-stage 70S ribosome quality control and in maturation of the 3' terminus of the 16S rRNA. This is Endoribonuclease YbeY from Bacillus licheniformis (strain ATCC 14580 / DSM 13 / JCM 2505 / CCUG 7422 / NBRC 12200 / NCIMB 9375 / NCTC 10341 / NRRL NRS-1264 / Gibson 46).